A 363-amino-acid polypeptide reads, in one-letter code: 3,4-dihydroxy-2-butanone 4-phosphate synthase (363 aa).

Positions 1-202 (MSHISPIPEI…IADLIEYRSR (202 aa)) are DHBP synthase. D-ribulose 5-phosphate contacts are provided by residues 28–29 (RE), aspartate 33, 141–145 (RAGHT), and glutamate 165. Glutamate 29 contacts Mg(2+). A Mg(2+)-binding site is contributed by histidine 144. The GTP cyclohydrolase II-like stretch occupies residues 205-363 (SLLEDMGNAP…EVVGFEEAEK (159 aa)).

In the N-terminal section; belongs to the DHBP synthase family. This sequence in the C-terminal section; belongs to the GTP cyclohydrolase II family. Mg(2+) is required as a cofactor. Mn(2+) serves as cofactor.

It catalyses the reaction D-ribulose 5-phosphate = (2S)-2-hydroxy-3-oxobutyl phosphate + formate + H(+). It participates in cofactor biosynthesis; riboflavin biosynthesis; 2-hydroxy-3-oxobutyl phosphate from D-ribulose 5-phosphate: step 1/1. Catalyzes the conversion of D-ribulose 5-phosphate to formate and 3,4-dihydroxy-2-butanone 4-phosphate. This is 3,4-dihydroxy-2-butanone 4-phosphate synthase (ribB) from Neisseria meningitidis serogroup B (strain ATCC BAA-335 / MC58).